The chain runs to 229 residues: Small ribosomal subunit protein uS3 (229 aa).

The KH type-2 domain maps to 39–107; it reads VRQYLTEKLK…TAQINIAEIR (69 aa).

It belongs to the universal ribosomal protein uS3 family. As to quaternary structure, part of the 30S ribosomal subunit. Forms a tight complex with proteins S10 and S14.

Binds the lower part of the 30S subunit head. Binds mRNA in the 70S ribosome, positioning it for translation. This chain is Small ribosomal subunit protein uS3, found in Shewanella denitrificans (strain OS217 / ATCC BAA-1090 / DSM 15013).